The following is a 289-amino-acid chain: Porin (289 aa).

Homotrimer.

The protein localises to the cell outer membrane. Functionally, forms channels that allow the passive diffusion of small hydrophilic solutes up to an exclusion limit of about 0.6 kDa. The polypeptide is Porin (opmA) (Fuscovulum blasticum (Rhodobacter blasticus)).